Reading from the N-terminus, the 401-residue chain is Imidazolonepropionase (401 aa).

Fe(3+) contacts are provided by His-66 and His-68. Residues His-66 and His-68 each coordinate Zn(2+). 4-imidazolone-5-propanoate-binding residues include Arg-75, Tyr-138, and His-171. Tyr-138 provides a ligand contact to N-formimidoyl-L-glutamate. His-236 contacts Fe(3+). Position 236 (His-236) interacts with Zn(2+). Residue Gln-239 coordinates 4-imidazolone-5-propanoate. Residue Asp-311 coordinates Fe(3+). Asp-311 contributes to the Zn(2+) binding site. The N-formimidoyl-L-glutamate site is built by Asn-313 and Gly-315. Residue Thr-316 coordinates 4-imidazolone-5-propanoate.

Belongs to the metallo-dependent hydrolases superfamily. HutI family. Zn(2+) serves as cofactor. It depends on Fe(3+) as a cofactor.

It localises to the cytoplasm. The enzyme catalyses 4-imidazolone-5-propanoate + H2O = N-formimidoyl-L-glutamate. It participates in amino-acid degradation; L-histidine degradation into L-glutamate; N-formimidoyl-L-glutamate from L-histidine: step 3/3. Catalyzes the hydrolytic cleavage of the carbon-nitrogen bond in imidazolone-5-propanoate to yield N-formimidoyl-L-glutamate. It is the third step in the universal histidine degradation pathway. The sequence is that of Imidazolonepropionase from Pseudomonas putida (strain ATCC 47054 / DSM 6125 / CFBP 8728 / NCIMB 11950 / KT2440).